Here is a 159-residue protein sequence, read N- to C-terminus: ATP synthase subunit b (159 aa).

Residues 7-27 (DFIWTLINFFVLLFILKILLY) form a helical membrane-spanning segment.

The protein belongs to the ATPase B chain family. F-type ATPases have 2 components, F(1) - the catalytic core - and F(0) - the membrane proton channel. F(1) has five subunits: alpha(3), beta(3), gamma(1), delta(1), epsilon(1). F(0) has three main subunits: a(1), b(2) and c(10-14). The alpha and beta chains form an alternating ring which encloses part of the gamma chain. F(1) is attached to F(0) by a central stalk formed by the gamma and epsilon chains, while a peripheral stalk is formed by the delta and b chains.

Its subcellular location is the cell membrane. Its function is as follows. F(1)F(0) ATP synthase produces ATP from ADP in the presence of a proton or sodium gradient. F-type ATPases consist of two structural domains, F(1) containing the extramembraneous catalytic core and F(0) containing the membrane proton channel, linked together by a central stalk and a peripheral stalk. During catalysis, ATP synthesis in the catalytic domain of F(1) is coupled via a rotary mechanism of the central stalk subunits to proton translocation. Component of the F(0) channel, it forms part of the peripheral stalk, linking F(1) to F(0). The polypeptide is ATP synthase subunit b (Carboxydothermus hydrogenoformans (strain ATCC BAA-161 / DSM 6008 / Z-2901)).